The chain runs to 3014 residues: Cadherin EGF LAG seven-pass G-type receptor 1 (3014 aa).

The signal sequence occupies residues 1–20 (MAPPPPPVLPVLLLLAAAAA). Residues 22–2469 (PAMGLRAAAW…RENGEVLPLK (2448 aa)) lie on the Extracellular side of the membrane. The segment at 205–242 (AGTPSASPSPSPPLPPNLPEARAGPARRARRGTSGRGS) is disordered. The segment covering 211-222 (SPSPSPPLPPNL) has biased composition (pro residues). 9 consecutive Cadherin domains span residues 246–353 (PMPN…SPVF), 354–459 (EQSE…YPQF), 460–565 (SEQN…EPIF), 566–687 (VSSP…DPVF), 688–789 (TQPT…RPVF), 790–892 (QSSH…APQF), 893–999 (LWDF…APMF), 1000–1101 (EKDE…PPVL), and 1106–1224 (ILFN…SPLL). N-linked (GlcNAc...) asparagine glycosylation is found at N403, N546, N634, and N778. 6 N-linked (GlcNAc...) asparagine glycosylation sites follow: N1114, N1139, N1213, N1249, N1259, and N1287. Positions 1303–1361 (DDNICLREPCENYMKCVSVLRFDSSAPFLSSTTVLFRPIHPINGLRCRCPPGFTGDYCE) constitute an EGF-like 1; calcium-binding domain. Intrachain disulfides connect C1307-C1318, C1312-C1349, C1351-C1360, C1367-C1378, C1372-C1387, C1389-C1398, C1407-C1418, C1412-C1428, and C1430-C1440. Residues 1363-1399 (EIDLCYSDPCGANGRCRSREGGYTCECFEDFTGEHCE) enclose the EGF-like 2; calcium-binding domain. Residues 1403 to 1441 (RSGRCANGVCKNGGTCVNLLIGGFHCVCPPGEYERPYCE) enclose the EGF-like 3; calcium-binding domain. The Laminin G-like 1 domain occupies 1442 to 1646 (VTTRSFPPQS…IANNGTREGC (205 aa)). Residues N1576, N1623, and N1640 are each glycosylated (N-linked (GlcNAc...) asparagine). Disulfide bonds link C1620/C1646, C1653/C1664, C1658/C1673, C1675/C1684, C1840/C1870, C1876/C1887, C1881/C1896, C1898/C1907, C1911/C1922, C1916/C1934, C1936/C1945, C1953/C1966, and C1968/C1978. Residues 1649-1685 (RRNFCDGRRCQNGGTCVNRWNMYLCECPLRFGGKNCE) enclose the EGF-like 4; calcium-binding domain. N1666 is subject to (3R)-3-hydroxyasparagine. In terms of domain architecture, Laminin G-like 2 spans 1689 to 1870 (PHPQLFSGES…ALKVRVKDGC (182 aa)). Residues 1872–1907 (VDDPCTSSPCPPNSRCHDAWEDYSCVCDKGYLGINC) enclose the EGF-like 5; calcium-binding domain. The residue at position 1889 (D1889) is a (3R)-3-hydroxyaspartate. The region spanning 1908–1946 (VDACHLNPCENMGACVRSPGSPQGYVCECGPSHYGPYCE) is the EGF-like 6; calcium-binding domain. The region spanning 1947-1979 (NKLDLPCPRGWWGNPVCGPCHCAVSKGFDPDCN) is the EGF-like 7; calcium-binding domain. A glycan (N-linked (GlcNAc...) asparagine) is linked at N1979. The EGF-like 8; calcium-binding domain maps to 1981–2016 (TNGQCQCKENYYKLLAQDTCLPCDCFPHGSHSRTCD). Disulfide bonds link C1985/C2000, C1987/C2003, C2005/C2015, C2024/C2033, and C2036/C2048. In terms of domain architecture, Laminin EGF-like spans 2003-2050 (CDCFPHGSHSRTCDMATGQCACKPGVIGRQCNRCDNPFAEVTTLGCEV). 3 N-linked (GlcNAc...) asparagine glycosylation sites follow: N2103, N2122, and N2257. The disordered stretch occupies residues 2291–2328 (PEEKEGPLLRPAGRRTTPQTTRPGPGTEREAPISRRRR). The region spanning 2297 to 2461 (PLLRPAGRRT…AVLMDISRRE (165 aa)) is the GAIN-B domain. Positions 2300–2316 (RPAGRRTTPQTTRPGPG) are enriched in low complexity. Disulfide bonds link C2411/C2443 and C2431/C2445. Positions 2411 to 2461 (CVFWNHSLAVGGTGGWSARGCELLSRNRTHVACQCSHTASFAVLMDISRRE) are GPS. N-linked (GlcNAc...) asparagine glycans are attached at residues N2415 and N2437. Residues 2470-2490 (IVTYAAVSLSLAALLVAFVLL) traverse the membrane as a helical segment. Residues 2491 to 2501 (SLVRMLRSNLH) lie on the Cytoplasmic side of the membrane. The helical transmembrane segment at 2502 to 2522 (SIHKHLAVALFLSQLVFVIGI) threads the bilayer. An N-linked (GlcNAc...) asparagine glycan is attached at N2523. The Extracellular segment spans residues 2523–2527 (NQTEN). Residues 2528–2548 (PFLCTVVAILLHYIYMSTFAW) form a helical membrane-spanning segment. The Cytoplasmic portion of the chain corresponds to 2549-2572 (TLVESLHVYRMLTEVRNIDTGPMR). A helical transmembrane segment spans residues 2573–2593 (FYYVVGWGIPAIVTGLAVGLD). Residues 2594-2611 (PQGYGNPDFCWLSLQDTL) lie on the Extracellular side of the membrane. The chain crosses the membrane as a helical span at residues 2612–2632 (IWSFAGPIGAVIIINTVTSVL). Residues 2633–2655 (SAKVSCQRKHHYYGKKGIVSLLR) are Cytoplasmic-facing. A helical membrane pass occupies residues 2656 to 2676 (TAFLLLLLISATWLLGLLAVN). Residues 2677–2683 (RDALSFH) are Extracellular-facing. A helical membrane pass occupies residues 2684–2704 (YLFAIFSGLQGPFVLLFHCVL). Topologically, residues 2705–3014 (NQEVRKHLKG…QADGSDSEKP (310 aa)) are cytoplasmic. Residues S2761 and S2764 each carry the phosphoserine modification. Disordered regions lie at residues 2777-2939 (SSGL…PPPL) and 2954-3014 (LADC…SEKP). The segment covering 2796–2806 (SCKDPPGHDSD) has biased composition (basic and acidic residues). The span at 2814-2825 (DEQSSSYASSHS) shows a compositional bias: low complexity. Phosphoserine is present on residues S2871 and S2873. Over residues 2876–2904 (PSGKPRLKVETKVSVELHREEQGSHRGEY) the composition is skewed to basic and acidic residues. Residues 2960–2969 (SPTSSRTSSL) show a composition bias toward low complexity. A compositionally biased stretch (basic and acidic residues) spans 2983–2992 (PGREPGRDHL).

Belongs to the G-protein coupled receptor 2 family. LN-TM7 subfamily. In terms of processing, the iron and 2-oxoglutarate dependent 3-hydroxylation of aspartate and asparagine is (R) stereospecific within EGF domains.

Its subcellular location is the cell membrane. Its function is as follows. Receptor that may have an important role in cell/cell signaling during nervous system formation. The polypeptide is Cadherin EGF LAG seven-pass G-type receptor 1 (CELSR1) (Homo sapiens (Human)).